The sequence spans 220 residues: Adenylate kinase (220 aa).

ATP is bound at residue 10–15 (GAGKGT). The interval 30-59 (STGDMLRAAVKAGTPLGVEAKGYMDAGKLV) is NMP. AMP is bound by residues Thr31, Arg36, 57–59 (KLV), 85–88 (GFPR), and Gln92. Residues 122-159 (GRRTHPASGRTYHVKFNPPKVEGKDDVTGEPLIQRDDD) are LID. ATP is bound by residues Arg123 and 132–133 (TY). Positions 156 and 167 each coordinate AMP. Gly206 provides a ligand contact to ATP.

This sequence belongs to the adenylate kinase family. As to quaternary structure, monomer.

Its subcellular location is the cytoplasm. The catalysed reaction is AMP + ATP = 2 ADP. It participates in purine metabolism; AMP biosynthesis via salvage pathway; AMP from ADP: step 1/1. In terms of biological role, catalyzes the reversible transfer of the terminal phosphate group between ATP and AMP. Plays an important role in cellular energy homeostasis and in adenine nucleotide metabolism. The chain is Adenylate kinase from Burkholderia multivorans (strain ATCC 17616 / 249).